A 494-amino-acid chain; its full sequence is tRNA-2-methylthio-N(6)-dimethylallyladenosine synthase (494 aa).

The MTTase N-terminal domain maps to 4–120 (RSYQVRTFGC…LPVLLERARH (117 aa)). [4Fe-4S] cluster-binding residues include C13, C49, C83, C157, C161, and C164. Positions 143–374 (RASHHSAWVS…SLQDEMSWAE (232 aa)) constitute a Radical SAM core domain. Residues 376 to 449 (RAQVGRRVEI…PHHLTADGPL (74 aa)) enclose the TRAM domain. The interval 465 to 494 (RAIAGDTPRPDRPAVSLGMPQLRPSAPAAR) is disordered.

The protein belongs to the methylthiotransferase family. MiaB subfamily. In terms of assembly, monomer. [4Fe-4S] cluster is required as a cofactor.

Its subcellular location is the cytoplasm. It catalyses the reaction N(6)-dimethylallyladenosine(37) in tRNA + (sulfur carrier)-SH + AH2 + 2 S-adenosyl-L-methionine = 2-methylsulfanyl-N(6)-dimethylallyladenosine(37) in tRNA + (sulfur carrier)-H + 5'-deoxyadenosine + L-methionine + A + S-adenosyl-L-homocysteine + 2 H(+). Its function is as follows. Catalyzes the methylthiolation of N6-(dimethylallyl)adenosine (i(6)A), leading to the formation of 2-methylthio-N6-(dimethylallyl)adenosine (ms(2)i(6)A) at position 37 in tRNAs that read codons beginning with uridine. The protein is tRNA-2-methylthio-N(6)-dimethylallyladenosine synthase of Parafrankia sp. (strain EAN1pec).